Reading from the N-terminus, the 447-residue chain is ATP-dependent protease ATPase subunit HslU (447 aa).

ATP contacts are provided by residues I17 and 59-64 (GVGKTE). The tract at residues 136–160 (PPARGGFQGEPTAEEKPTEKKESAT) is disordered. Residues 148–159 (AEEKPTEKKESA) show a composition bias toward basic and acidic residues. ATP contacts are provided by D260, E325, and R397.

This sequence belongs to the ClpX chaperone family. HslU subfamily. In terms of assembly, a double ring-shaped homohexamer of HslV is capped on each side by a ring-shaped HslU homohexamer. The assembly of the HslU/HslV complex is dependent on binding of ATP.

Its subcellular location is the cytoplasm. Functionally, ATPase subunit of a proteasome-like degradation complex; this subunit has chaperone activity. The binding of ATP and its subsequent hydrolysis by HslU are essential for unfolding of protein substrates subsequently hydrolyzed by HslV. HslU recognizes the N-terminal part of its protein substrates and unfolds these before they are guided to HslV for hydrolysis. The chain is ATP-dependent protease ATPase subunit HslU from Coxiella burnetii (strain RSA 331 / Henzerling II).